Reading from the N-terminus, the 281-residue chain is 4-deoxy-L-threo-5-hexosulose-uronate ketol-isomerase (281 aa).

Zn(2+) contacts are provided by His198, His200, Glu205, and His248.

It belongs to the KduI family. Zn(2+) is required as a cofactor.

The enzyme catalyses 5-dehydro-4-deoxy-D-glucuronate = 3-deoxy-D-glycero-2,5-hexodiulosonate. It functions in the pathway glycan metabolism; pectin degradation; 2-dehydro-3-deoxy-D-gluconate from pectin: step 4/5. Its function is as follows. Catalyzes the isomerization of 5-dehydro-4-deoxy-D-glucuronate to 3-deoxy-D-glycero-2,5-hexodiulosonate. In Lacticaseibacillus paracasei (strain ATCC 334 / BCRC 17002 / CCUG 31169 / CIP 107868 / KCTC 3260 / NRRL B-441) (Lactobacillus paracasei), this protein is 4-deoxy-L-threo-5-hexosulose-uronate ketol-isomerase.